Here is a 662-residue protein sequence, read N- to C-terminus: Glycine--tRNA ligase beta subunit (662 aa).

It belongs to the class-II aminoacyl-tRNA synthetase family. As to quaternary structure, tetramer of two alpha and two beta subunits.

It is found in the cytoplasm. It catalyses the reaction tRNA(Gly) + glycine + ATP = glycyl-tRNA(Gly) + AMP + diphosphate. This Rickettsia akari (strain Hartford) protein is Glycine--tRNA ligase beta subunit.